Here is a 424-residue protein sequence, read N- to C-terminus: uncharacterized protein (424 aa).

The protein belongs to the serpin family.

This is an uncharacterized protein from Methanosarcina acetivorans (strain ATCC 35395 / DSM 2834 / JCM 12185 / C2A).